A 656-amino-acid chain; its full sequence is UvrABC system protein B (656 aa).

A Helicase ATP-binding domain is found at 24-409; it reads QGVRNRTPSQ…QGHIVEQILR (386 aa). Residue 37-44 coordinates ATP; sequence GTTGSGKT. The Beta-hairpin motif lies at 90–113; the sequence is YYDYYQPEAYIARNDTYIEKSLLI. A Helicase C-terminal domain is found at 426–589; that stretch reads QVDDLLEEIR…ITPKPIIKAI (164 aa). The region spanning 616 to 651 is the UVR domain; the sequence is EKLIKKYENLMLQAANAFRFDEAAQYRDKMKAAKEQ.

It belongs to the UvrB family. Forms a heterotetramer with UvrA during the search for lesions. Interacts with UvrC in an incision complex.

The protein localises to the cytoplasm. Functionally, the UvrABC repair system catalyzes the recognition and processing of DNA lesions. A damage recognition complex composed of 2 UvrA and 2 UvrB subunits scans DNA for abnormalities. Upon binding of the UvrA(2)B(2) complex to a putative damaged site, the DNA wraps around one UvrB monomer. DNA wrap is dependent on ATP binding by UvrB and probably causes local melting of the DNA helix, facilitating insertion of UvrB beta-hairpin between the DNA strands. Then UvrB probes one DNA strand for the presence of a lesion. If a lesion is found the UvrA subunits dissociate and the UvrB-DNA preincision complex is formed. This complex is subsequently bound by UvrC and the second UvrB is released. If no lesion is found, the DNA wraps around the other UvrB subunit that will check the other stand for damage. In Chlamydia abortus (strain DSM 27085 / S26/3) (Chlamydophila abortus), this protein is UvrABC system protein B.